The primary structure comprises 236 residues: Orotidine 5'-phosphate decarboxylase (236 aa).

Substrate contacts are provided by residues aspartate 17, lysine 39, 66 to 75 (DLKFYDIPNT), threonine 125, arginine 187, glutamine 196, glycine 216, and arginine 217. Catalysis depends on lysine 68, which acts as the Proton donor.

Belongs to the OMP decarboxylase family. Type 1 subfamily. As to quaternary structure, homodimer.

The catalysed reaction is orotidine 5'-phosphate + H(+) = UMP + CO2. It participates in pyrimidine metabolism; UMP biosynthesis via de novo pathway; UMP from orotate: step 2/2. Catalyzes the decarboxylation of orotidine 5'-monophosphate (OMP) to uridine 5'-monophosphate (UMP). The polypeptide is Orotidine 5'-phosphate decarboxylase (Buchnera aphidicola subsp. Baizongia pistaciae (strain Bp)).